The sequence spans 1368 residues: Indole-3-acetaldehyde oxidase (1368 aa).

A 2Fe-2S ferredoxin-type domain is found at 19–108 (TSLVFAINGQ…GCSITTSDGL (90 aa)). [2Fe-2S] cluster contacts are provided by Cys60, Cys65, and Cys68. The region spanning 246 to 427 (LHSRKYRWSS…LSLEIPSWHS (182 aa)) is the FAD-binding PCMH-type domain.

The protein belongs to the xanthine dehydrogenase family. Aldehyde oxidases (AO) are homodimers and heterodimers of AO subunits. AO-alpha is an AAO1 homodimer; AO-beta is an AAO1-AAO2 heterodimer. Requires [2Fe-2S] cluster as cofactor. The cofactor is FAD. Mo-molybdopterin serves as cofactor. As to expression, predominantly expressed in roots, seedlings, mature siliques and seeds, and to lower extent in stems and rosettes. In seedlings, mostly expressed in lower part of hypocotyls and roots.

The protein localises to the cytoplasm. The enzyme catalyses indole-3-acetaldehyde + O2 + H2O = (indol-3-yl)acetate + H2O2 + H(+). With respect to regulation, strongly inhibited by iodoacetate and potassium cyanide (KCN). Weakly inhibited by 2-mercaptoethanol, dithiothreitol (DTT), menadione, estradiol, 4'-(9-acridinylamino)methanesulfon-m-anisidine (mAMSA), allopurinol and tritonX-100. Not affected by p-chloromercuribenzoate. Functionally, in higher plants aldehyde oxidases (AO) appear to be homo- and heterodimeric assemblies of AO subunits with probably different physiological functions. AO-alpha may be involved in the biosynthesis of auxin, and in biosynthesis of abscisic acid (ABA) in seeds. In vitro, AO-alpha uses heptaldehyde, protocatechualdehyde, benzaldehyde, indole-3-aldehyde (IAld), indole-3-acetaldehyde (IAAld), cinnamaldehyde and citral as substrates; AO-beta uses IAAld, IAld and naphtaldehyde as substrates. In Arabidopsis thaliana (Mouse-ear cress), this protein is Indole-3-acetaldehyde oxidase (AAO1).